Here is a 401-residue protein sequence, read N- to C-terminus: MTSILTNVAAMAALQTLRGIDSNMEETQARVSSGLRVGTASDNAAYWSIATTMRSDNMALSAVQDALGLGAAKVDTAYAGMENAVEVVKEIRAKLVAATEDGVDKAKIQEEIEQLKQQLTSIATAASFSGENWLQADITTPVTKSVVGSFVRDSSGVVSVKTIDYVLDGNSVLFDTVGDAGILDKIYNVSQASVTLPVNVNGTTTEYTVAAYAVDELIAAGATFDGDSANVTGYTVPAGGIDYNGNFVKVEGTWVRAIDVAATGQEVVYDDGTTKWGVDTTVAGAPAINVVAPASIENIDITNAAQAANLDALIRGVDEALEDLISATSALGSISMRIGMQEEFVSKLTDSIDSGIGRLVDADMNEESTRLKALQTQQQLAIQSLSIANTNSENILQLFRQ.

Belongs to the bacterial flagellin family.

The protein resides in the secreted. Its subcellular location is the bacterial flagellum. Flagellin is the subunit protein which polymerizes to form the filaments of bacterial flagella. This is Flagellin D (flaD) from Rhizobium meliloti (strain 1021) (Ensifer meliloti).